We begin with the raw amino-acid sequence, 437 residues long: Protein farnesyltransferase subunit beta (437 aa).

5 PFTB repeats span residues 123-164 (ATDV…CIIG), 174-215 (REKL…SLTN), 222-263 (FEGT…VILK), 270-312 (LKSL…PLLH), and 332-374 (QQAL…SIAQ). (2E,6E)-farnesyl diphosphate contacts are provided by residues 248–251 (HGGY) and 291–294 (RCNK). Zn(2+)-binding residues include aspartate 297 and cysteine 299. 300–303 (YSFW) serves as a coordination point for (2E,6E)-farnesyl diphosphate. Histidine 362 lines the Zn(2+) pocket. Threonine 436 is subject to Phosphothreonine.

It belongs to the protein prenyltransferase subunit beta family. In terms of assembly, heterodimer of FNTA and FNTB. It depends on Zn(2+) as a cofactor.

It carries out the reaction L-cysteinyl-[protein] + (2E,6E)-farnesyl diphosphate = S-(2E,6E)-farnesyl-L-cysteinyl-[protein] + diphosphate. Its function is as follows. Essential subunit of the farnesyltransferase complex. Catalyzes the transfer of a farnesyl moiety from farnesyl diphosphate to a cysteine at the fourth position from the C-terminus of several proteins having the C-terminal sequence Cys-aliphatic-aliphatic-X. This is Protein farnesyltransferase subunit beta (FNTB) from Homo sapiens (Human).